A 282-amino-acid polypeptide reads, in one-letter code: Acetyl-coenzyme A carboxylase carboxyl transferase subunit beta (282 aa).

Positions 23 to 282 (IWTKCGQCDA…MLSKLHHQQA (260 aa)) constitute a CoA carboxyltransferase N-terminal domain. Residues C27, C30, C46, and C49 each coordinate Zn(2+). The segment at 27-49 (CGQCDAVLYKTELEKQLGVCPKC) adopts a C4-type zinc-finger fold.

It belongs to the AccD/PCCB family. In terms of assembly, acetyl-CoA carboxylase is a heterohexamer composed of biotin carboxyl carrier protein (AccB), biotin carboxylase (AccC) and two subunits each of ACCase subunit alpha (AccA) and ACCase subunit beta (AccD). Zn(2+) is required as a cofactor.

It localises to the cytoplasm. It carries out the reaction N(6)-carboxybiotinyl-L-lysyl-[protein] + acetyl-CoA = N(6)-biotinyl-L-lysyl-[protein] + malonyl-CoA. It functions in the pathway lipid metabolism; malonyl-CoA biosynthesis; malonyl-CoA from acetyl-CoA: step 1/1. Its function is as follows. Component of the acetyl coenzyme A carboxylase (ACC) complex. Biotin carboxylase (BC) catalyzes the carboxylation of biotin on its carrier protein (BCCP) and then the CO(2) group is transferred by the transcarboxylase to acetyl-CoA to form malonyl-CoA. The protein is Acetyl-coenzyme A carboxylase carboxyl transferase subunit beta of Pseudoalteromonas atlantica (strain T6c / ATCC BAA-1087).